Here is a 244-residue protein sequence, read N- to C-terminus: Capsid protein (244 aa).

Positions 1 to 24 (MSTSKRKRGDDANWNKRTTKKKPS) match the Bipartite nuclear localization signal motif. A disordered region spans residues 1–39 (MSTSKRKRGDDANWNKRTTKKKPSSAGLKKAGSKAERPS).

This sequence belongs to the geminiviridae capsid protein family. As to quaternary structure, homomultimer. Interacts with the movement protein. Binds to single-stranded and double-stranded viral DNA.

It localises to the virion. Its subcellular location is the host nucleus. In terms of biological role, encapsidates the viral genome into characteristic twinned ('geminate') particles. Binds the genomic viral ssDNA and shuttles it into and out of the cell nucleus. Plays a role in protection of the genome from degradation, virus acquisition and transmission by insect vectors, infectivity, and systemic movement. The CP of monopartite geminiviruses is absolutely essential for virus movement. The sequence is that of Capsid protein from Maize streak virus genotype B (isolate Tas) (MSV).